The following is a 347-amino-acid chain: Phenylalanine--tRNA ligase alpha subunit (347 aa).

Glutamate 265 serves as a coordination point for Mg(2+).

It belongs to the class-II aminoacyl-tRNA synthetase family. Phe-tRNA synthetase alpha subunit type 1 subfamily. Tetramer of two alpha and two beta subunits. Mg(2+) serves as cofactor.

The protein resides in the cytoplasm. The enzyme catalyses tRNA(Phe) + L-phenylalanine + ATP = L-phenylalanyl-tRNA(Phe) + AMP + diphosphate + H(+). This chain is Phenylalanine--tRNA ligase alpha subunit, found in Wolbachia sp. subsp. Drosophila simulans (strain wRi).